The sequence spans 274 residues: NH(3)-dependent NAD(+) synthetase (274 aa).

46–53 (GISGGQDS) lines the ATP pocket. A Mg(2+)-binding site is contributed by Asp52. Arg140 provides a ligand contact to deamido-NAD(+). Thr160 is a binding site for ATP. Glu165 serves as a coordination point for Mg(2+). The deamido-NAD(+) site is built by Lys173 and Asp180. ATP is bound by residues Lys189 and Thr211. Residue 260–261 (HK) coordinates deamido-NAD(+).

The protein belongs to the NAD synthetase family. As to quaternary structure, homodimer.

The enzyme catalyses deamido-NAD(+) + NH4(+) + ATP = AMP + diphosphate + NAD(+) + H(+). It participates in cofactor biosynthesis; NAD(+) biosynthesis; NAD(+) from deamido-NAD(+) (ammonia route): step 1/1. Its function is as follows. Catalyzes the ATP-dependent amidation of deamido-NAD to form NAD. Uses ammonia as a nitrogen source. The protein is NH(3)-dependent NAD(+) synthetase of Streptococcus uberis (strain ATCC BAA-854 / 0140J).